A 616-amino-acid polypeptide reads, in one-letter code: Protein LNK1 (616 aa).

4 disordered regions span residues Gly72–Asn112, Glu361–Val398, Ala410–Ser434, and Ser567–Asn616. Over residues Lys371–Gly395 the composition is skewed to polar residues. Low complexity predominate over residues Ser567–Ser577. Positions Arg594–Ala608 are enriched in basic and acidic residues.

Interacts with CCA1, LHY, REV4 and REV8, but not with PRR7 or PRR9. In terms of tissue distribution, expressed in roots, stems, leaves, seedlings, cotyledons, inflorescences and siliques. Highest expression in root tips, young leaves and vasculatur tissues.

The protein localises to the nucleus. Functionally, transcriptional coactivator necessary for expression of the clock genes PRR5 and TOC1. Antagonizes REV8 function in the regulation of anthocyanin accumulation. Involved in red light input to the clock. Activates clock-controlled genes with afternoon peak. Mediates light inhibition of hypocotyl elongation. In Arabidopsis thaliana (Mouse-ear cress), this protein is Protein LNK1.